Consider the following 556-residue polypeptide: 2-succinyl-5-enolpyruvyl-6-hydroxy-3-cyclohexene-1-carboxylate synthase (556 aa).

This sequence belongs to the TPP enzyme family. MenD subfamily. In terms of assembly, homodimer. The cofactor is Mg(2+). Mn(2+) serves as cofactor. Thiamine diphosphate is required as a cofactor.

The enzyme catalyses isochorismate + 2-oxoglutarate + H(+) = 5-enolpyruvoyl-6-hydroxy-2-succinyl-cyclohex-3-ene-1-carboxylate + CO2. It functions in the pathway quinol/quinone metabolism; 1,4-dihydroxy-2-naphthoate biosynthesis; 1,4-dihydroxy-2-naphthoate from chorismate: step 2/7. It participates in quinol/quinone metabolism; menaquinone biosynthesis. In terms of biological role, catalyzes the thiamine diphosphate-dependent decarboxylation of 2-oxoglutarate and the subsequent addition of the resulting succinic semialdehyde-thiamine pyrophosphate anion to isochorismate to yield 2-succinyl-5-enolpyruvyl-6-hydroxy-3-cyclohexene-1-carboxylate (SEPHCHC). The chain is 2-succinyl-5-enolpyruvyl-6-hydroxy-3-cyclohexene-1-carboxylate synthase from Staphylococcus haemolyticus (strain JCSC1435).